A 1024-amino-acid polypeptide reads, in one-letter code: Beta-galactosidase (1024 aa).

Residues asparagine 103 and aspartate 202 each coordinate substrate. Residue aspartate 202 participates in Na(+) binding. Mg(2+) is bound by residues glutamate 417, histidine 419, and glutamate 462. Substrate-binding positions include glutamate 462 and 538–541 (EYAH). Catalysis depends on glutamate 462, which acts as the Proton donor. The active-site Nucleophile is glutamate 538. Asparagine 598 lines the Mg(2+) pocket. Residues phenylalanine 602 and asparagine 605 each contribute to the Na(+) site. Positions 605 and 1000 each coordinate substrate.

Belongs to the glycosyl hydrolase 2 family. In terms of assembly, homotetramer. Requires Mg(2+) as cofactor. Na(+) serves as cofactor.

It catalyses the reaction Hydrolysis of terminal non-reducing beta-D-galactose residues in beta-D-galactosides.. This chain is Beta-galactosidase, found in Escherichia coli O139:H28 (strain E24377A / ETEC).